The primary structure comprises 542 residues: Putative selenium-binding protein (542 aa).

It belongs to the selenium-binding protein family.

This Caenorhabditis elegans protein is Putative selenium-binding protein.